Reading from the N-terminus, the 974-residue chain is Membrane-associated phosphatidylinositol transfer protein 3 (974 aa).

Residues S30, S31, S109, S295, S298, S321, S343, and S495 each carry the phosphoserine modification. The disordered stretch occupies residues 284 to 304 (GDSPASSSRKGSISSTQDTPV). The segment covering 292–302 (RKGSISSTQDT) has biased composition (polar residues). Disordered regions lie at residues 323–346 (IDIS…SDSS) and 491–536 (SSRD…SMAP). The 205-residue stretch at 390–594 (FDFDVSDFFL…VAFILRQVMR (205 aa)) folds into the DDHD domain. Low complexity predominate over residues 520-533 (EGSSHSESSESSDS). Phosphoserine occurs at positions 612, 907, 928, and 946. Positions 927-974 (MSVQQPDPPAANPKPERAQSQPESDKDHERPLPALSWARGPPKFESVP) are disordered.

Belongs to the PtdIns transfer protein family. PI transfer class IIA subfamily. Interacts with PTK2B via its C-terminus. Detected in brain and spleen, and at low levels in ovary.

The protein resides in the endomembrane system. Functionally, catalyzes the transfer of phosphatidylinositol and phosphatidylcholine between membranes (in vitro). Binds calcium ions. This chain is Membrane-associated phosphatidylinositol transfer protein 3 (PITPNM3), found in Homo sapiens (Human).